Here is a 511-residue protein sequence, read N- to C-terminus: Tryptophan 5-halogenase PyrH (511 aa).

FAD-binding residues include Gly-10, Ala-13, Ser-36, Val-39, Ile-42, Val-44, and Ala-47. Residue Ser-50 participates in L-tryptophan binding. Residue Lys-75 is part of the active site. L-tryptophan is bound by residues Pro-93, Gln-160, and Gln-163. Val-195 and Leu-345 together coordinate FAD. The chloride site is built by Thr-356 and Gly-357. Position 358 (Ile-358) interacts with FAD. Residues Gly-450 and Tyr-454 each contribute to the L-tryptophan site.

Belongs to the flavin-dependent halogenase family. Bacterial tryptophan halogenase subfamily. In terms of assembly, homodimer.

It catalyses the reaction L-tryptophan + FADH2 + chloride + O2 = 5-chloro-L-tryptophan + FAD + 2 H2O. It functions in the pathway antibiotic biosynthesis. In terms of biological role, involved in the biosynthesis of the antibiotic compound pyrroindomycin B. Catalyzes the chlorination of tryptophan (Trp) at C5 position to yield 5-chloro-L-tryptophan. It is also able to use bromide ions to generate monobrominated Trp, but the brominating activity is only about 75% of the chlorinating activity. In Streptomyces rugosporus, this protein is Tryptophan 5-halogenase PyrH.